The following is a 1396-amino-acid chain: Probable ATP-dependent RNA helicase spindle-E (1396 aa).

Residues methionine 1–lysine 34 are disordered. Positions glutamate 16–glutamate 30 are enriched in acidic residues. A Helicase ATP-binding domain is found at leucine 68–leucine 234. Glycine 81 to threonine 88 lines the ATP pocket. The DEAH box motif lies at aspartate 180–histidine 183. Positions lysine 292 to glutamate 468 constitute a Helicase C-terminal domain. One can recognise a Tudor domain in the interval asparagine 885–leucine 950.

Belongs to the DEAD box helicase family. DEAH subfamily.

The protein localises to the cytoplasm. The catalysed reaction is ATP + H2O = ADP + phosphate + H(+). Functionally, probable ATP-binding RNA helicase which plays a central role during gametogenesis by repressing transposable elements and preventing their mobilization, which is essential for the germline integrity. Acts via the piRNA metabolic process, which mediates the repression of transposable elements during meiosis by forming complexes composed of piRNAs and Piwi proteins and govern the methylation and subsequent repression of transposons. This is Probable ATP-dependent RNA helicase spindle-E (spn-E) from Culex quinquefasciatus (Southern house mosquito).